The following is a 332-amino-acid chain: Ectoine dioxygenase (332 aa).

Over residues 1–10 (MSVQTSSNRP) the composition is skewed to polar residues. Residues 1 to 47 (MSVQTSSNRPLPQANLHIATETPEADSRIRSAPRPGQDPYPTRLSEP) are disordered. Gln163 lines the L-ectoine pocket. A 2-oxoglutarate-binding site is contributed by Lys169. Residues His180, Asp182, and His281 each coordinate Fe cation.

This sequence belongs to the PhyH family. EctD subfamily. Homodimer. Requires Fe(2+) as cofactor.

The catalysed reaction is L-ectoine + 2-oxoglutarate + O2 = 5-hydroxyectoine + succinate + CO2. Its function is as follows. Involved in the biosynthesis of 5-hydroxyectoine, called compatible solute, which helps organisms to survive extreme osmotic stress by acting as a highly soluble organic osmolyte. Catalyzes the 2-oxoglutarate-dependent selective hydroxylation of L-ectoine to yield (4S,5S)-5-hydroxyectoine. This Halomonas elongata (strain ATCC 33173 / DSM 2581 / NBRC 15536 / NCIMB 2198 / 1H9) protein is Ectoine dioxygenase.